An 82-amino-acid chain; its full sequence is Delta-ctenitoxin-Pn2a (82 aa).

An N-terminal signal peptide occupies residues 1-17; sequence MKVAILFLSILVLAVAS. Positions 18 to 34 are excised as a propeptide; it reads ESIEESRDDFAVEELGR. 5 cysteine pairs are disulfide-bonded: Cys-37–Cys-51, Cys-44–Cys-57, Cys-48–Cys-80, Cys-50–Cys-65, and Cys-59–Cys-63.

Belongs to the neurotoxin 03 (Tx2) family. 06 subfamily. As to expression, expressed by the venom gland.

The protein localises to the secreted. In terms of biological role, toxin that is known to potentiate erectile function. It binds voltage-dependently to sodium channels (Nav), inhibits the inactivation of the activated channels and decreases the peak inward current. The toxin delays inactivation of Nav1.2/SCN2A, Nav1.3/SCN3A, Nav1.4/SCN4A and Nav1.8/SCN10A, slows the inactivation process and decreases the sodium peak amplitude of Nav1.5/SCN5A and Nav1.6/SCN8A. In vivo, it enhances erectile function by inducing the release of nictric oxide (NO): it slows the sodium current, leading to depolarization, which leads to an increase in calcium influx (probably via activation of N-type calcium channels) which in turn activates neuronal NO synthase (nNOS/NOS1), inducing nitric oxide (NO) production. In a final step, NO activates soluble guanylate cyclase (GUCY1A1/GUCY1B1) which in turn increases cGMP formation, resulting in penile erection. It is noteworthy that the toxin does not provoke erection by inhibiting phosphodiesterase type 5 (PDE5A), an enzyme that hydrolysis cGMP. In vivo, it also causes scratching, lacrimation, hypersalivation, sweating and agitation followed by spastic paralysis of the anterior and posterior extremities and death at dose levels of 0.79 mg/mouse. It is insecticidal to the larval and adult forms of the house fly. The toxin also improves cavernosal relaxation in different models where erectile dysfunction is observed, such as deoxycorticosterone-acetate (DOCA)-salt hypertensive rats, mice models for type-1 diabetes, as well as elderly rats. This chain is Delta-ctenitoxin-Pn2a, found in Phoneutria nigriventer (Brazilian armed spider).